Consider the following 151-residue polypeptide: Cytochrome c-type biogenesis protein CcmE (151 aa).

Residues 1–8 (MNPLRRKR) are Cytoplasmic-facing. Residues 9–29 (LLIILAILVGVGVAVGLALSA) traverse the membrane as a helical; Signal-anchor for type II membrane protein segment. Topologically, residues 30–151 (LQQNINLFYT…QSAPTPAKEG (122 aa)) are periplasmic. Heme contacts are provided by histidine 124 and tyrosine 128.

Belongs to the CcmE/CycJ family.

The protein resides in the cell inner membrane. In terms of biological role, heme chaperone required for the biogenesis of c-type cytochromes. Transiently binds heme delivered by CcmC and transfers the heme to apo-cytochromes in a process facilitated by CcmF and CcmH. The polypeptide is Cytochrome c-type biogenesis protein CcmE (Pseudomonas fluorescens biotype C).